We begin with the raw amino-acid sequence, 117 residues long: Large ribosomal subunit protein uL18 (117 aa).

This sequence belongs to the universal ribosomal protein uL18 family. In terms of assembly, part of the 50S ribosomal subunit; part of the 5S rRNA/L5/L18/L25 subcomplex. Contacts the 5S and 23S rRNAs.

Functionally, this is one of the proteins that bind and probably mediate the attachment of the 5S RNA into the large ribosomal subunit, where it forms part of the central protuberance. The protein is Large ribosomal subunit protein uL18 of Leuconostoc citreum (strain KM20).